The sequence spans 321 residues: Annexin A5 (321 aa).

An N-acetylalanine modification is found at A2. Annexin repeat units follow at residues F15–K86, P87–Q158, A170–K242, and S246–G317. Residue K29 forms a Glycyl lysine isopeptide (Lys-Gly) (interchain with G-Cter in SUMO1); alternate linkage. A Glycyl lysine isopeptide (Lys-Gly) (interchain with G-Cter in SUMO2); alternate cross-link involves residue K29. 5 positions are modified to N6-acetyllysine: K70, K76, K79, K97, and K101. K290 is subject to N6-succinyllysine. The [IL]-x-C-x-x-[DE] motif motif lies at L314 to D320.

It belongs to the annexin family. As to quaternary structure, monomer. Binds ATRX and EIF5B. Post-translationally, S-nitrosylation is induced by interferon-gamma and oxidatively-modified low-densitity lipoprotein (LDL(ox)) possibly implicating the iNOS-S100A8/9 transnitrosylase complex.

This protein is an anticoagulant protein that acts as an indirect inhibitor of the thromboplastin-specific complex, which is involved in the blood coagulation cascade. The sequence is that of Annexin A5 (ANXA5) from Bos taurus (Bovine).